The chain runs to 350 residues: Leucine-rich repeat-containing protein 58 (350 aa).

10 LRR repeats span residues 14–34 (NLTH…NKRK), 35–56 (DVQQ…VASF), 58–80 (HLHL…LGLT), 81–102 (KLKT…KEMG), 105–125 (RLEV…QFLQ), 128–149 (TLKS…IENL), 151–173 (SLEF…ANLP), 174–195 (YLSY…LAQV), 197–218 (SLRS…ILSL), and 220–240 (HLHE…RDLT).

The polypeptide is Leucine-rich repeat-containing protein 58 (lrrc58) (Xenopus laevis (African clawed frog)).